The following is a 270-amino-acid chain: Triosephosphate isomerase (270 aa).

Asn27 to Lys29 provides a ligand contact to substrate. The active-site Electrophile is His114. Glu184 serves as the catalytic Proton acceptor. Substrate is bound by residues Gly190, Ser230, and Gly251–Gly252.

It belongs to the triosephosphate isomerase family. Homodimer.

The protein localises to the cytoplasm. It carries out the reaction D-glyceraldehyde 3-phosphate = dihydroxyacetone phosphate. It functions in the pathway carbohydrate biosynthesis; gluconeogenesis. Its pathway is carbohydrate degradation; glycolysis; D-glyceraldehyde 3-phosphate from glycerone phosphate: step 1/1. Functionally, involved in the gluconeogenesis. Catalyzes stereospecifically the conversion of dihydroxyacetone phosphate (DHAP) to D-glyceraldehyde-3-phosphate (G3P). In Chlamydia muridarum (strain MoPn / Nigg), this protein is Triosephosphate isomerase.